A 440-amino-acid chain; its full sequence is tRNA-2-methylthio-N(6)-dimethylallyladenosine synthase (440 aa).

One can recognise an MTTase N-terminal domain in the interval 4 to 122; the sequence is KSYYIITHGC…LPKILERVFE (119 aa). C13, C49, C83, C159, C163, and C166 together coordinate [4Fe-4S] cluster. The Radical SAM core domain maps to 145 to 375; the sequence is REPGVRAWVT…IELQNGISLE (231 aa). The 63-residue stretch at 378–440 folds into the TRAM domain; it reads KNEEGNIHEI…KLFHLEGVLV (63 aa).

The protein belongs to the methylthiotransferase family. MiaB subfamily. Monomer. [4Fe-4S] cluster serves as cofactor.

The protein resides in the cytoplasm. The enzyme catalyses N(6)-dimethylallyladenosine(37) in tRNA + (sulfur carrier)-SH + AH2 + 2 S-adenosyl-L-methionine = 2-methylsulfanyl-N(6)-dimethylallyladenosine(37) in tRNA + (sulfur carrier)-H + 5'-deoxyadenosine + L-methionine + A + S-adenosyl-L-homocysteine + 2 H(+). Functionally, catalyzes the methylthiolation of N6-(dimethylallyl)adenosine (i(6)A), leading to the formation of 2-methylthio-N6-(dimethylallyl)adenosine (ms(2)i(6)A) at position 37 in tRNAs that read codons beginning with uridine. This chain is tRNA-2-methylthio-N(6)-dimethylallyladenosine synthase, found in Carboxydothermus hydrogenoformans (strain ATCC BAA-161 / DSM 6008 / Z-2901).